A 768-amino-acid chain; its full sequence is DNA replication licensing factor MCM3 homolog 1 (768 aa).

The MCM domain occupies threonine 290–alanine 497. Position 340-347 (glycine 340–serine 347) interacts with ATP. Positions serine 472 to aspartate 475 match the Arginine finger motif. The disordered stretch occupies residues methionine 662–proline 687. The segment covering alanine 672–serine 682 has biased composition (gly residues).

Belongs to the MCM family.

Its subcellular location is the nucleus. The catalysed reaction is ATP + H2O = ADP + phosphate + H(+). Acts as a factor that allows the DNA to undergo a single round of replication per cell cycle. Required for DNA replication and cell proliferation. May act as a component of the MCM complex which is the putative replicative helicase of the replication licensing system in eukaryotic cells. This Zea mays (Maize) protein is DNA replication licensing factor MCM3 homolog 1 (ROA1).